The chain runs to 268 residues: Small ribosomal subunit protein mS43 (268 aa).

The N-terminal 23 residues, 1-23 (MLNTGLRKGLALSPITHLLKRCS), are a transit peptide targeting the mitochondrion.

Belongs to the mitochondrion-specific ribosomal protein mS43 family. Component of the mitochondrial small ribosomal subunit (mt-SSU). Mature yeast 74S mitochondrial ribosomes consist of a small (37S) and a large (54S) subunit. The 37S small subunit contains a 15S ribosomal RNA (15S mt-rRNA) and at least 32 different proteins. The 54S large subunit contains a 21S rRNA (21S mt-rRNA) and at least 45 different proteins. mS43 forms a dimer with mS42, building a large protuberance adjacent to the mRNA channel exit in the mt-SSU body.

The protein resides in the mitochondrion. Its function is as follows. Component of the mitochondrial ribosome (mitoribosome), a dedicated translation machinery responsible for the synthesis of mitochondrial genome-encoded proteins, including at least some of the essential transmembrane subunits of the mitochondrial respiratory chain. The mitoribosomes are attached to the mitochondrial inner membrane and translation products are cotranslationally integrated into the membrane. The polypeptide is Small ribosomal subunit protein mS43 (Schizosaccharomyces pombe (strain 972 / ATCC 24843) (Fission yeast)).